A 556-amino-acid chain; its full sequence is Formate--tetrahydrofolate ligase (556 aa).

65 to 72 lines the ATP pocket; it reads TPAGEGKT.

The protein belongs to the formate--tetrahydrofolate ligase family.

It carries out the reaction (6S)-5,6,7,8-tetrahydrofolate + formate + ATP = (6R)-10-formyltetrahydrofolate + ADP + phosphate. It participates in one-carbon metabolism; tetrahydrofolate interconversion. The polypeptide is Formate--tetrahydrofolate ligase (Peptoclostridium acidaminophilum (Eubacterium acidaminophilum)).